We begin with the raw amino-acid sequence, 334 residues long: Glutaminase (334 aa).

Substrate is bound by residues Ser76, Asn126, Glu170, Asn177, Tyr201, Tyr253, and Val271.

This sequence belongs to the glutaminase family. Homotetramer.

It catalyses the reaction L-glutamine + H2O = L-glutamate + NH4(+). This is Glutaminase from Trichormus variabilis (strain ATCC 29413 / PCC 7937) (Anabaena variabilis).